We begin with the raw amino-acid sequence, 116 residues long: NADPH-dependent 7-cyano-7-deazaguanine reductase (116 aa).

Cys31 functions as the Thioimide intermediate in the catalytic mechanism. The active-site Proton donor is Asp38. Substrate is bound by residues Ile53–Leu55 and Tyr72–Glu73.

Belongs to the GTP cyclohydrolase I family. QueF type 1 subfamily.

It localises to the cytoplasm. It carries out the reaction 7-aminomethyl-7-carbaguanine + 2 NADP(+) = 7-cyano-7-deazaguanine + 2 NADPH + 3 H(+). The protein operates within tRNA modification; tRNA-queuosine biosynthesis. In terms of biological role, catalyzes the NADPH-dependent reduction of 7-cyano-7-deazaguanine (preQ0) to 7-aminomethyl-7-deazaguanine (preQ1). The protein is NADPH-dependent 7-cyano-7-deazaguanine reductase of Chlorobium luteolum (strain DSM 273 / BCRC 81028 / 2530) (Pelodictyon luteolum).